The chain runs to 67 residues: ORF2p protein (67 aa).

The tract at residues 13-18 is important for viral replication in intestinal cells; it reads WIGHPV. The chain crosses the lipid bilayer at residues 22 to 38; it reads AIIYPFVGFIPLSLKEV.

It localises to the host cytoplasmic vesicle membrane. In terms of biological role, facilitates virus release from intestinal cells in vitro, possibly through the host autophagic pathway. The polypeptide is ORF2p protein (Homo sapiens (Human)).